A 429-amino-acid polypeptide reads, in one-letter code: 3-phosphoshikimate 1-carboxyvinyltransferase (429 aa).

Positions 11, 12, and 16 each coordinate 3-phosphoshikimate. Lys11 lines the phosphoenolpyruvate pocket. Phosphoenolpyruvate is bound by residues Gly82 and Arg110. 3-phosphoshikimate contacts are provided by Ser155, Gln157, Asp302, and Lys329. Gln157 is a binding site for phosphoenolpyruvate. Asp302 serves as the catalytic Proton acceptor. Arg333 and Arg385 together coordinate phosphoenolpyruvate.

It belongs to the EPSP synthase family. Monomer.

It is found in the cytoplasm. The catalysed reaction is 3-phosphoshikimate + phosphoenolpyruvate = 5-O-(1-carboxyvinyl)-3-phosphoshikimate + phosphate. It participates in metabolic intermediate biosynthesis; chorismate biosynthesis; chorismate from D-erythrose 4-phosphate and phosphoenolpyruvate: step 6/7. Functionally, catalyzes the transfer of the enolpyruvyl moiety of phosphoenolpyruvate (PEP) to the 5-hydroxyl of shikimate-3-phosphate (S3P) to produce enolpyruvyl shikimate-3-phosphate and inorganic phosphate. The chain is 3-phosphoshikimate 1-carboxyvinyltransferase from Helicobacter pylori (strain J99 / ATCC 700824) (Campylobacter pylori J99).